We begin with the raw amino-acid sequence, 239 residues long: uncharacterized protein (239 aa).

An N-terminal signal peptide occupies residues 1–19 (MPLLHRTIIFLQLLGTISS). Asparagine 44, asparagine 58, asparagine 72, asparagine 92, asparagine 109, asparagine 136, asparagine 172, asparagine 192, and asparagine 213 each carry an N-linked (GlcNAc...) asparagine glycan.

Its subcellular location is the secreted. This is an uncharacterized protein from Caenorhabditis elegans.